Reading from the N-terminus, the 53-residue chain is uncharacterized protein (53 aa).

Belongs to the ycf15 family.

The protein localises to the plastid. The protein resides in the chloroplast. This is an uncharacterized protein from Helianthus annuus (Common sunflower).